A 175-amino-acid chain; its full sequence is Adenine phosphoribosyltransferase (175 aa).

Belongs to the purine/pyrimidine phosphoribosyltransferase family. As to quaternary structure, homodimer.

Its subcellular location is the cytoplasm. The catalysed reaction is AMP + diphosphate = 5-phospho-alpha-D-ribose 1-diphosphate + adenine. It participates in purine metabolism; AMP biosynthesis via salvage pathway; AMP from adenine: step 1/1. Catalyzes a salvage reaction resulting in the formation of AMP, that is energically less costly than de novo synthesis. In Lacticaseibacillus paracasei (strain ATCC 334 / BCRC 17002 / CCUG 31169 / CIP 107868 / KCTC 3260 / NRRL B-441) (Lactobacillus paracasei), this protein is Adenine phosphoribosyltransferase.